The primary structure comprises 419 residues: Serine hydroxymethyltransferase (419 aa).

(6S)-5,6,7,8-tetrahydrofolate contacts are provided by residues leucine 121 and 125–127; that span reads GHL. Lysine 230 bears the N6-(pyridoxal phosphate)lysine mark. Residue 355-357 coordinates (6S)-5,6,7,8-tetrahydrofolate; that stretch reads SPF.

It belongs to the SHMT family. In terms of assembly, homodimer. It depends on pyridoxal 5'-phosphate as a cofactor.

The protein resides in the cytoplasm. The enzyme catalyses (6R)-5,10-methylene-5,6,7,8-tetrahydrofolate + glycine + H2O = (6S)-5,6,7,8-tetrahydrofolate + L-serine. The protein operates within one-carbon metabolism; tetrahydrofolate interconversion. Its pathway is amino-acid biosynthesis; glycine biosynthesis; glycine from L-serine: step 1/1. In terms of biological role, catalyzes the reversible interconversion of serine and glycine with tetrahydrofolate (THF) serving as the one-carbon carrier. This reaction serves as the major source of one-carbon groups required for the biosynthesis of purines, thymidylate, methionine, and other important biomolecules. Also exhibits THF-independent aldolase activity toward beta-hydroxyamino acids, producing glycine and aldehydes, via a retro-aldol mechanism. In Streptococcus equi subsp. zooepidemicus (strain H70), this protein is Serine hydroxymethyltransferase.